The primary structure comprises 141 residues: uncharacterized protein (141 aa).

The next 2 membrane-spanning stretches (helical) occupy residues 64–84 (IAAVGLAVSGPGVLYKVIEAI) and 112–132 (IVGSGAAFVTALGVAAFLVLI).

The protein localises to the cell membrane. This is an uncharacterized protein from Sinorhizobium fredii (strain NBRC 101917 / NGR234).